Consider the following 173-residue polypeptide: DELTA-actitoxin-Oor1b (173 aa).

The interval 6-25 (GAALGFNVHQTVLKALGQVS) is N-terminal region. Phosphocholine is bound by residues S49, V82, S100, P102, Y128, and Y133. Residues 100 to 115 (SVPFDYNLYSNWWDVK) are trp-rich region, which is important for the binding to lipid membrane.

It belongs to the actinoporin family. Sea anemone subfamily. In terms of assembly, octamer or nonamer in membranes. Monomer in the soluble state.

The protein localises to the secreted. The protein resides in the nematocyst. Its subcellular location is the target cell membrane. Pore-forming protein that forms cations-selective hydrophilic pores of around 1 nm and causes cardiac stimulation and cytolysis. Pore formation is a multi-step process that involves specific recognition of membrane sphingomyelin (but neither cholesterol nor phosphatidylcholine) using aromatic rich region and adjacent phosphocholine (POC) binding site, firm binding to the membrane (mainly driven by hydrophobic interactions) accompanied by the transfer of the N-terminal region to the lipid-water interface and finally pore formation after oligomerization of monomers. Cytolytic effects include red blood cells hemolysis, platelet aggregation and lysis, cytotoxic and cytostatic effects on fibroblasts. Lethality in mammals has been ascribed to severe vasospasm of coronary vessels, cardiac arrhythmia, and inotropic effects. The chain is DELTA-actitoxin-Oor1b from Oulactis orientalis (Japan anemone).